A 304-amino-acid chain; its full sequence is Porphobilinogen deaminase (304 aa).

C240 is subject to S-(dipyrrolylmethanemethyl)cysteine.

Belongs to the HMBS family. As to quaternary structure, monomer. The cofactor is dipyrromethane.

It carries out the reaction 4 porphobilinogen + H2O = hydroxymethylbilane + 4 NH4(+). It functions in the pathway porphyrin-containing compound metabolism; protoporphyrin-IX biosynthesis; coproporphyrinogen-III from 5-aminolevulinate: step 2/4. Functionally, tetrapolymerization of the monopyrrole PBG into the hydroxymethylbilane pre-uroporphyrinogen in several discrete steps. The sequence is that of Porphobilinogen deaminase from Xanthomonas oryzae pv. oryzae (strain MAFF 311018).